We begin with the raw amino-acid sequence, 267 residues long: Protein BMH1 (267 aa).

Residue serine 2 is modified to N-acetylserine. Lysine 76 participates in a covalent cross-link: Glycyl lysine isopeptide (Lys-Gly) (interchain with G-Cter in ubiquitin). Residue serine 89 is modified to Phosphoserine. Positions 236–267 (DMSESGQAEDQQQQQQHQQQQPPAAAEGEAPK) are disordered. The span at 243–267 (AEDQQQQQQHQQQQPPAAAEGEAPK) shows a compositional bias: low complexity.

Belongs to the 14-3-3 family. As to quaternary structure, homodimer. Interacts with NTH1 (via N-terminus when phosphorylated by PKA); the interaction is direct and activates NTH1. Interacts with FIN1.

Its function is as follows. Involved in growth regulation. In Saccharomyces cerevisiae (strain ATCC 204508 / S288c) (Baker's yeast), this protein is Protein BMH1 (BMH1).